Reading from the N-terminus, the 256-residue chain is Pimeloyl-[acyl-carrier protein] methyl ester esterase (256 aa).

The region spanning 15 to 242 (HLVLLHGWGL…AAHAPFISHP (228 aa)) is the AB hydrolase-1 domain. Residues Trp22, 82 to 83 (SL), and 143 to 147 (FLALQ) contribute to the substrate site. Ser82 acts as the Nucleophile in catalysis. Active-site residues include Asp207 and His235. His235 is a binding site for substrate.

It belongs to the AB hydrolase superfamily. Carboxylesterase BioH family. Monomer.

The protein localises to the cytoplasm. The enzyme catalyses 6-carboxyhexanoyl-[ACP] methyl ester + H2O = 6-carboxyhexanoyl-[ACP] + methanol + H(+). It participates in cofactor biosynthesis; biotin biosynthesis. Functionally, the physiological role of BioH is to remove the methyl group introduced by BioC when the pimeloyl moiety is complete. It allows to synthesize pimeloyl-ACP via the fatty acid synthetic pathway through the hydrolysis of the ester bonds of pimeloyl-ACP esters. The chain is Pimeloyl-[acyl-carrier protein] methyl ester esterase from Escherichia coli O81 (strain ED1a).